The following is a 389-amino-acid chain: Inactive serine/threonine-protein kinase ZRK12 (389 aa).

Positions 41-342 (SADEIRKATN…ETQFDSHQDI (302 aa)) constitute a Protein kinase domain. Residues 47-55 (KATNNFGVS) and Lys84 each bind ATP. Tyr129 carries the post-translational modification Phosphotyrosine. Thr214 carries the post-translational modification Phosphothreonine. Tyr222 carries the post-translational modification Phosphotyrosine.

It belongs to the protein kinase superfamily. Ser/Thr protein kinase family.

Together with RPP13L4/ZAR1, involved in the regulation of the ambient temperature-sensitive intersection of growth and immune response in the absence of pathogens. The chain is Inactive serine/threonine-protein kinase ZRK12 from Arabidopsis thaliana (Mouse-ear cress).